The primary structure comprises 397 residues: Tubby-like protein 8 (397 aa).

A compositionally biased stretch (basic and acidic residues) spans 1–16 (MAGSRKVNDLLEENKG). A disordered region spans residues 1 to 46 (MAGSRKVNDLLEENKGNVDTITGSLSTQKGEDKENVSPEKVSTSVE). The segment covering 17 to 28 (NVDTITGSLSTQ) has biased composition (polar residues).

This sequence belongs to the TUB family. Mostly expressed in roots, flowers and siliques.

The protein is Tubby-like protein 8 of Arabidopsis thaliana (Mouse-ear cress).